The following is a 754-amino-acid chain: Protein neuralized (754 aa).

In terms of domain architecture, NHR 1 spans 106-260 (PLQFHSVHGD…NCTGIEFLDS (155 aa)). Residues 280-297 (QQQQMPQPAANASSALNS) are compositionally biased toward low complexity. A disordered region spans residues 280–308 (QQQQMPQPAANASSALNSHHPHQQSRRSL). Residues Ser338 and Ser341 each carry the phosphoserine modification. Positions 368–523 (PVPFHNTKGR…STQSLRMFRQ (156 aa)) constitute an NHR 2 domain. An RING-type zinc finger spans residues 701–742 (CTICYENPIDSVLYMCGHMCMCYDCAIEQWRGVGGGQCPLCR).

The protein resides in the nucleus. In terms of biological role, involved in neurogenesis. Interacts with other neurogenic proteins in the specification of the neuroblast versus epidermoblast cell fate. This Drosophila melanogaster (Fruit fly) protein is Protein neuralized (neur).